The primary structure comprises 412 residues: Sexual development regulator umv3 (412 aa).

The interval 1–197 (MSAQDDIDTG…PPLLSDLPRH (197 aa)) is disordered. Composition is skewed to polar residues over residues 73–93 (RANT…SASS) and 149–170 (RQSA…PGST). A compositionally biased stretch (basic and acidic residues) spans 171 to 181 (ENERVRMHDQR). The Velvet domain occupies 195-388 (PRHSTDNKTY…ARQGIQVPVR (194 aa)).

Belongs to the velvet family. VelC subfamily.

The protein resides in the nucleus. Velvet-domain-containing protein not required for disease or sexual development on seedlings. The chain is Sexual development regulator umv3 from Mycosarcoma maydis (Corn smut fungus).